A 215-amino-acid polypeptide reads, in one-letter code: Small ribosomal subunit protein bS6 (215 aa).

Disordered stretches follow at residues 121–153 and 187–215; these read RENNPENPDVPVTSGLASTQPRLSRTEKAQKPK and NQRQNQQNNNNNRFDRNRNRQHNRFKDKQ. Basic and acidic residues predominate over residues 144–153; that stretch reads SRTEKAQKPK. The segment covering 188-198 has biased composition (low complexity); it reads QRQNQQNNNNN. The span at 199-215 shows a compositional bias: basic and acidic residues; sequence RFDRNRNRQHNRFKDKQ.

It belongs to the bacterial ribosomal protein bS6 family.

Functionally, binds together with bS18 to 16S ribosomal RNA. The sequence is that of Small ribosomal subunit protein bS6 (rpsF) from Mycoplasma pneumoniae (strain ATCC 29342 / M129 / Subtype 1) (Mycoplasmoides pneumoniae).